The primary structure comprises 407 residues: S-adenosylmethionine synthase (407 aa).

An ATP-binding site is contributed by His21. A Mg(2+)-binding site is contributed by Asp23. K(+) is bound at residue Glu49. Glu62 and Gln105 together coordinate L-methionine. The segment at 105–115 (QSQEIGAGVDA) is flexible loop. ATP contacts are provided by residues 179–181 (DGK), Asp259, 265–266 (RK), Ala282, and Lys286. Asp259 provides a ligand contact to L-methionine. Position 290 (Lys290) interacts with L-methionine.

It belongs to the AdoMet synthase family. In terms of assembly, homotetramer; dimer of dimers. Mg(2+) is required as a cofactor. The cofactor is K(+).

The protein localises to the cytoplasm. The catalysed reaction is L-methionine + ATP + H2O = S-adenosyl-L-methionine + phosphate + diphosphate. Its pathway is amino-acid biosynthesis; S-adenosyl-L-methionine biosynthesis; S-adenosyl-L-methionine from L-methionine: step 1/1. Catalyzes the formation of S-adenosylmethionine (AdoMet) from methionine and ATP. The overall synthetic reaction is composed of two sequential steps, AdoMet formation and the subsequent tripolyphosphate hydrolysis which occurs prior to release of AdoMet from the enzyme. The polypeptide is S-adenosylmethionine synthase (Corynebacterium aurimucosum (strain ATCC 700975 / DSM 44827 / CIP 107346 / CN-1) (Corynebacterium nigricans)).